A 115-amino-acid chain; its full sequence is Large ribosomal subunit protein bL20c (115 aa).

The protein belongs to the bacterial ribosomal protein bL20 family.

The protein localises to the plastid. It localises to the chloroplast. Its function is as follows. Binds directly to 23S ribosomal RNA and is necessary for the in vitro assembly process of the 50S ribosomal subunit. It is not involved in the protein synthesizing functions of that subunit. This chain is Large ribosomal subunit protein bL20c, found in Physcomitrium patens (Spreading-leaved earth moss).